Here is a 156-residue protein sequence, read N- to C-terminus: Small ribosomal subunit protein uS7 (156 aa).

Belongs to the universal ribosomal protein uS7 family. Part of the 30S ribosomal subunit. Contacts proteins S9 and S11.

One of the primary rRNA binding proteins, it binds directly to 16S rRNA where it nucleates assembly of the head domain of the 30S subunit. Is located at the subunit interface close to the decoding center, probably blocks exit of the E-site tRNA. The protein is Small ribosomal subunit protein uS7 of Streptococcus agalactiae serotype Ia (strain ATCC 27591 / A909 / CDC SS700).